The sequence spans 337 residues: Adenylosuccinate synthetase (337 aa).

GTP-binding positions include 12–18 (GDEGKGK) and 42–44 (GHT). Asp13 (proton acceptor) is an active-site residue. Mg(2+) is bound by residues Asp13 and Gly42. IMP contacts are provided by residues 13–16 (DEGK), 40–43 (NAGH), Thr127, Arg141, Gln179, Thr194, and Arg256. The active-site Proton donor is His43. 252–258 (TVTGRRR) contributes to the substrate binding site. GTP-binding positions include Arg258, 284–286 (CLD), and 324–326 (STG).

It belongs to the adenylosuccinate synthetase family. Homodimer. Requires Mg(2+) as cofactor.

It localises to the cytoplasm. It catalyses the reaction IMP + L-aspartate + GTP = N(6)-(1,2-dicarboxyethyl)-AMP + GDP + phosphate + 2 H(+). Its pathway is purine metabolism; AMP biosynthesis via de novo pathway; AMP from IMP: step 1/2. In terms of biological role, plays an important role in the de novo pathway of purine nucleotide biosynthesis. Catalyzes the first committed step in the biosynthesis of AMP from IMP. The sequence is that of Adenylosuccinate synthetase from Methanococcus maripaludis (strain C6 / ATCC BAA-1332).